A 584-amino-acid polypeptide reads, in one-letter code: Proteasome-associated ATPase (584 aa).

A coiled-coil region spans residues 16–91; that stretch reads EELASQVRLL…KEEVDRLAQP (76 aa). Position 273-278 (273-278) interacts with ATP; that stretch reads GCGKTL. Residues 583-584 are docks into pockets in the proteasome alpha-ring; the sequence is YL.

Belongs to the AAA ATPase family. As to quaternary structure, homohexamer. Assembles into a hexameric ring structure that caps the 20S proteasome core. Strongly interacts with the prokaryotic ubiquitin-like protein Pup through a hydrophobic interface; the interacting region of ARC lies in its N-terminal coiled-coil domain. There is one Pup binding site per ARC hexamer ring. Upon ATP-binding, the C-terminus of ARC interacts with the alpha-rings of the proteasome core, possibly by binding to the intersubunit pockets.

The protein operates within protein degradation; proteasomal Pup-dependent pathway. Functionally, ATPase which is responsible for recognizing, binding, unfolding and translocation of pupylated proteins into the bacterial 20S proteasome core particle. May be essential for opening the gate of the 20S proteasome via an interaction with its C-terminus, thereby allowing substrate entry and access to the site of proteolysis. Thus, the C-termini of the proteasomal ATPase may function like a 'key in a lock' to induce gate opening and therefore regulate proteolysis. The sequence is that of Proteasome-associated ATPase from Nocardioides sp. (strain ATCC BAA-499 / JS614).